A 326-amino-acid polypeptide reads, in one-letter code: Intracellular serine protease (326 aa).

Positions 23 to 303 constitute a Peptidase S8 domain; that stretch reads PRGVEMIQAP…NGLLYLTAVE (281 aa). Catalysis depends on charge relay system residues Asp-49, His-86, and Ser-244.

Belongs to the peptidase S8 family.

In terms of biological role, involved in the generation of beta- and alpha-amylases from the large amylase precursor. This Paenibacillus polymyxa (Bacillus polymyxa) protein is Intracellular serine protease (isp).